A 518-amino-acid polypeptide reads, in one-letter code: Protein translocase subunit SecD (518 aa).

Helical transmembrane passes span 9-29 (IFLS…NFMQ), 361-381 (LIGF…LGLF), 384-404 (IALS…QATL), 406-426 (LPGI…NVLI), 452-474 (FATI…IFGV), and 486-506 (IGII…IDIW).

The protein belongs to the SecD/SecF family. SecD subfamily. Forms a complex with SecF. Part of the essential Sec protein translocation apparatus which comprises SecA, SecYEG and auxiliary proteins SecDF-YajC and YidC.

Its subcellular location is the cell inner membrane. In terms of biological role, part of the Sec protein translocase complex. Interacts with the SecYEG preprotein conducting channel. SecDF uses the proton motive force (PMF) to complete protein translocation after the ATP-dependent function of SecA. The polypeptide is Protein translocase subunit SecD (Rickettsia conorii (strain ATCC VR-613 / Malish 7)).